Here is a 195-residue protein sequence, read N- to C-terminus: Probable nicotinate-nucleotide adenylyltransferase (195 aa).

It belongs to the NadD family.

It carries out the reaction nicotinate beta-D-ribonucleotide + ATP + H(+) = deamido-NAD(+) + diphosphate. The protein operates within cofactor biosynthesis; NAD(+) biosynthesis; deamido-NAD(+) from nicotinate D-ribonucleotide: step 1/1. Its function is as follows. Catalyzes the reversible adenylation of nicotinate mononucleotide (NaMN) to nicotinic acid adenine dinucleotide (NaAD). This Dictyoglomus thermophilum (strain ATCC 35947 / DSM 3960 / H-6-12) protein is Probable nicotinate-nucleotide adenylyltransferase.